Consider the following 310-residue polypeptide: Quinolinate synthase (310 aa).

Iminosuccinate-binding residues include His-27 and Ser-44. Position 89 (Cys-89) interacts with [4Fe-4S] cluster. Iminosuccinate is bound by residues 115 to 117 and Ser-132; that span reads YVN. Cys-175 is a binding site for [4Fe-4S] cluster. Iminosuccinate contacts are provided by residues 201–203 and Thr-222; that span reads HPE. Cys-267 contacts [4Fe-4S] cluster.

Belongs to the quinolinate synthase family. Type 2 subfamily. [4Fe-4S] cluster is required as a cofactor.

It is found in the cytoplasm. The catalysed reaction is iminosuccinate + dihydroxyacetone phosphate = quinolinate + phosphate + 2 H2O + H(+). It functions in the pathway cofactor biosynthesis; NAD(+) biosynthesis; quinolinate from iminoaspartate: step 1/1. Its function is as follows. Catalyzes the condensation of iminoaspartate with dihydroxyacetone phosphate to form quinolinate. The protein is Quinolinate synthase of Thermus thermophilus (strain ATCC 27634 / DSM 579 / HB8).